The primary structure comprises 46 residues: Large ribosomal subunit protein bL36 (46 aa).

Belongs to the bacterial ribosomal protein bL36 family.

The polypeptide is Large ribosomal subunit protein bL36 (Salmonella agona (strain SL483)).